The sequence spans 428 residues: Enolase (428 aa).

Gln-165 provides a ligand contact to (2R)-2-phosphoglycerate. Catalysis depends on Glu-207, which acts as the Proton donor. Positions 244, 283, and 310 each coordinate Mg(2+). Positions 335, 364, 365, and 386 each coordinate (2R)-2-phosphoglycerate. Lys-335 acts as the Proton acceptor in catalysis.

It belongs to the enolase family. The cofactor is Mg(2+).

The protein resides in the cytoplasm. The protein localises to the secreted. It localises to the cell surface. It carries out the reaction (2R)-2-phosphoglycerate = phosphoenolpyruvate + H2O. The protein operates within carbohydrate degradation; glycolysis; pyruvate from D-glyceraldehyde 3-phosphate: step 4/5. Catalyzes the reversible conversion of 2-phosphoglycerate (2-PG) into phosphoenolpyruvate (PEP). It is essential for the degradation of carbohydrates via glycolysis. In Chlamydia pneumoniae (Chlamydophila pneumoniae), this protein is Enolase.